A 797-amino-acid polypeptide reads, in one-letter code: Striatin-3 (797 aa).

The residue at position 1 (Met1) is an N-acetylmethionine. Composition is skewed to gly residues over residues 1 to 13 (MDEL…GGPG) and 23 to 43 (GPGG…GGGP). The tract at residues 1–60 (MDELAGGGGGGPGMAAPPRQQQGPGGNLGLSPGGNGAAGGGGPPASEGAGPAAGPELSRP) is disordered. The span at 44–56 (PASEGAGPAAGPE) shows a compositional bias: low complexity. The segment at 71 to 79 (YIQHEWARF) is caveolin-binding. A coiled-coil region spans residues 77 to 136 (ARFEMERAHWEVERAELQARIAFLQGERKGQENLKKDLVRRIKMLEYALKQERAKYHKLK). Position 150 is a phosphothreonine (Thr150). The tract at residues 166-183 (QNSQLTWKQGRQLLRQYL) is calmodulin-binding. Residues Ser202, Ser214, and Ser229 each carry the phosphoserine modification. 2 disordered regions span residues 224-278 (LNGG…KHRM) and 313-338 (DGEG…SPTA). The span at 230–241 (PKQKGQEIKRSS) shows a compositional bias: basic and acidic residues. The span at 253-265 (NADDSDEDEENDM) shows a compositional bias: acidic residues. A phosphoserine mark is found at Ser257 and Ser335. WD repeat units follow at residues 478-517 (SHFD…PAKK), 531-570 (AHIG…VDPY), 584-623 (GHTD…PCIC), 679-718 (QSNN…MIHS), 721-760 (AHLD…CVQE), and 767-797 (KLDE…KVFV).

This sequence belongs to the WD repeat striatin family. As to quaternary structure, tetramerizes. Part of the core of STRIPAK complexes composed of PP2A catalytic and scaffolding subunits, the striatins (PP2A regulatory subunits), the striatin-associated proteins MOB4, STRIP1 and STRIP2, PDCD10 and members of the STE20 kinases, such as STK24 and STK26. The STRIPAK complex can be extended by adapter proteins such as SLMAP:SIKE1 or CTTNBP2NL. Interacts with CDC42BPB.

Its subcellular location is the cytoplasm. It is found in the membrane. Its function is as follows. Calmodulin-binding scaffolding protein which is the center of the striatin-interacting phosphatase and kinase (STRIPAK) complexes. STRIPAK complexes have critical roles in protein (de)phosphorylation and are regulators of multiple signaling pathways including Hippo, MAPK, nuclear receptor and cytoskeleton remodeling. Different types of STRIPAK complexes are involved in a variety of biological processes such as cell growth, differentiation, apoptosis, metabolism and immune regulation. In Homo sapiens (Human), this protein is Striatin-3.